The chain runs to 331 residues: Phosphate acyltransferase (331 aa).

This sequence belongs to the PlsX family. Homodimer. Probably interacts with PlsY.

It is found in the cytoplasm. It carries out the reaction a fatty acyl-[ACP] + phosphate = an acyl phosphate + holo-[ACP]. The protein operates within lipid metabolism; phospholipid metabolism. Functionally, catalyzes the reversible formation of acyl-phosphate (acyl-PO(4)) from acyl-[acyl-carrier-protein] (acyl-ACP). This enzyme utilizes acyl-ACP as fatty acyl donor, but not acyl-CoA. The chain is Phosphate acyltransferase from Lactococcus lactis subsp. cremoris (strain SK11).